We begin with the raw amino-acid sequence, 100 residues long: Large ribosomal subunit protein uL23 (100 aa).

This sequence belongs to the universal ribosomal protein uL23 family. Part of the 50S ribosomal subunit. Contacts protein L29, and trigger factor when it is bound to the ribosome.

Its function is as follows. One of the early assembly proteins it binds 23S rRNA. One of the proteins that surrounds the polypeptide exit tunnel on the outside of the ribosome. Forms the main docking site for trigger factor binding to the ribosome. This Prochlorococcus marinus (strain MIT 9312) protein is Large ribosomal subunit protein uL23.